Here is a 509-residue protein sequence, read N- to C-terminus: uncharacterized protein (509 aa).

It localises to the virion. This is an uncharacterized protein from Acanthamoeba polyphaga mimivirus (APMV).